We begin with the raw amino-acid sequence, 305 residues long: Auxin-responsive protein IAA27 (305 aa).

Positions 45–49 match the EAR-like (transcriptional repression) motif; that stretch reads LRLGL. Disordered stretches follow at residues 96–119 and 155–180; these read TTATGDVGSGSGPRTSVVKDGKST and KNSMASSQSQKPGNNSETEEAEAKSG. Positions 155-170 are enriched in polar residues; that stretch reads KNSMASSQSQKPGNNS. One can recognise a PB1 domain in the interval 185-287; that stretch reads CLYVKVSMEG…SCKKLRIMKS (103 aa).

The protein belongs to the Aux/IAA family. In terms of assembly, homodimers and heterodimers. Interacts with phytochrome A. Interacts with TPL.

It is found in the nucleus. Its function is as follows. Aux/IAA proteins are short-lived transcriptional factors that function as repressors of early auxin response genes at low auxin concentrations. Repression is thought to result from the interaction with auxin response factors (ARFs), proteins that bind to the auxin-responsive promoter element (AuxRE). Formation of heterodimers with ARF proteins may alter their ability to modulate early auxin response genes expression. This is Auxin-responsive protein IAA27 (IAA27) from Arabidopsis thaliana (Mouse-ear cress).